We begin with the raw amino-acid sequence, 37 residues long: Large ribosomal subunit protein bL36 (37 aa).

Belongs to the bacterial ribosomal protein bL36 family.

This chain is Large ribosomal subunit protein bL36, found in Solidesulfovibrio magneticus (strain ATCC 700980 / DSM 13731 / RS-1) (Desulfovibrio magneticus).